Here is a 618-residue protein sequence, read N- to C-terminus: 1-deoxy-D-xylulose-5-phosphate synthase (618 aa).

Thiamine diphosphate-binding positions include His72 and 113-115; that span reads GHA. A Mg(2+)-binding site is contributed by Asp144. Thiamine diphosphate-binding positions include 145–146, Asn173, His284, and Glu359; that span reads GA. Mg(2+) is bound at residue Asn173.

The protein belongs to the transketolase family. DXPS subfamily. In terms of assembly, homodimer. It depends on Mg(2+) as a cofactor. The cofactor is thiamine diphosphate.

It carries out the reaction D-glyceraldehyde 3-phosphate + pyruvate + H(+) = 1-deoxy-D-xylulose 5-phosphate + CO2. Its pathway is metabolic intermediate biosynthesis; 1-deoxy-D-xylulose 5-phosphate biosynthesis; 1-deoxy-D-xylulose 5-phosphate from D-glyceraldehyde 3-phosphate and pyruvate: step 1/1. Its function is as follows. Catalyzes the acyloin condensation reaction between C atoms 2 and 3 of pyruvate and glyceraldehyde 3-phosphate to yield 1-deoxy-D-xylulose-5-phosphate (DXP). The chain is 1-deoxy-D-xylulose-5-phosphate synthase from Dictyoglomus thermophilum (strain ATCC 35947 / DSM 3960 / H-6-12).